The chain runs to 382 residues: Neuropeptide Y receptor type 1 (382 aa).

The Extracellular portion of the chain corresponds to 1-33; the sequence is MNSTLFSKVENHSIHYNASENSPLLAFENDDCH. N-linked (GlcNAc...) asparagine glycans are attached at residues N2, N11, and N17. A helical transmembrane segment spans residues 34 to 54; it reads LPLAVIFTLALAYGAVIILGV. The Cytoplasmic portion of the chain corresponds to 55–75; that stretch reads SGNLALIIIILKQKEMRNVTN. The chain crosses the membrane as a helical span at residues 76–96; that stretch reads ILIVNLSFSDLLVAVMCLPFT. Residues 97–115 lie on the Extracellular side of the membrane; the sequence is FVYTLMDHWVFGETMCKLN. A disulfide bridge links C112 with C197. A helical membrane pass occupies residues 116 to 136; it reads PFVQCVSITVSIFSLVLIAVE. Residues 137–153 are Cytoplasmic-facing; it reads RHQLIINPRGWRPNNRH. A helical transmembrane segment spans residues 154–174; the sequence is AYIGITVIWVLAVASSLPFVI. Over 175-210 the chain is Extracellular; the sequence is YQILTDEPFQNVSLAAFKDKYVCFDKFPSDSHRLSY. The chain crosses the membrane as a helical span at residues 211–231; that stretch reads TTLLLVLQYFGPLCFIFICYF. Over 232–259 the chain is Cytoplasmic; sequence KIYIRLKRRNNMMDKIRDSKYRSSETKR. Residues 260-280 form a helical membrane-spanning segment; that stretch reads INIMLLSIVVAFAVCWLPLTI. Over 281–298 the chain is Extracellular; the sequence is FNTVFDWNHQIIATCNHN. A helical transmembrane segment spans residues 299-319; sequence LLFLLCHLTAMISTCVNPIFY. The Cytoplasmic portion of the chain corresponds to 320-382; that stretch reads GFLNKNFQRD…KISMNDNEKV (63 aa). A lipid anchor (S-palmitoyl cysteine) is attached at C337. A phosphoserine mark is found at S367 and S375.

The protein belongs to the G-protein coupled receptor 1 family. The alpha form is highly expressed in the brain, heart, kidney, spleen, skeletal muscle, and lung, whereas the beta receptor mRNA was not detected in these tissues. However, the beta form is expressed in mouse embryonic developmental stage (7 and 11 days), bone marrow cells and several hematopoietic cell lines.

The protein localises to the cell membrane. Receptor for neuropeptide Y and peptide YY. The polypeptide is Neuropeptide Y receptor type 1 (Npy1r) (Mus musculus (Mouse)).